We begin with the raw amino-acid sequence, 205 residues long: Methylamine utilization protein MauD (205 aa).

Residues 5–25 form a helical membrane-spanning segment; it reads FLIASNVLLWLALIGCAVLML. Positions 50 to 184 constitute a Thioredoxin domain; it reads PDVGDAAPTF…LESLLEADKS (135 aa).

The protein resides in the membrane. The protein operates within one-carbon metabolism; methylamine degradation. May be specifically involved in the processing, transport, and/or maturation of the MADH beta-subunit. The protein is Methylamine utilization protein MauD (mauD) of Methylorubrum extorquens (strain ATCC 14718 / DSM 1338 / JCM 2805 / NCIMB 9133 / AM1) (Methylobacterium extorquens).